The sequence spans 246 residues: Glandular kallikrein (246 aa).

A propeptide spanning residues 1–7 is cleaved from the precursor; that stretch reads APPIQSR. The Peptidase S1 domain maps to 8–243; the sequence is IIGGRECEKN…YLDWINDTIT (236 aa). Cystine bridges form between cysteine 14–cysteine 158, cysteine 33–cysteine 49, cysteine 135–cysteine 204, cysteine 169–cysteine 183, and cysteine 194–cysteine 219. The active-site Charge relay system is histidine 48. Asparagine 85 is a glycosylation site (N-linked (GlcNAc...) asparagine). The interval 85 to 104 is kallikrein (autolysis) loop; the sequence is NLSLLKXHTKADGKDYSHDL. The active-site Charge relay system is the aspartate 103. Catalysis depends on serine 198, which acts as the Charge relay system. Asparagine 239 carries an N-linked (GlcNAc...) asparagine glycan.

The protein belongs to the peptidase S1 family. Kallikrein subfamily. Monomer.

It carries out the reaction Preferential cleavage of Arg-|-Xaa bonds in small molecule substrates. Highly selective action to release kallidin (lysyl-bradykinin) from kininogen involves hydrolysis of Met-|-Xaa or Leu-|-Xaa.. Functionally, glandular kallikreins cleave Met-Lys and Arg-Ser bonds in kininogen to release Lys-bradykinin. The polypeptide is Glandular kallikrein (Sus scrofa (Pig)).